The primary structure comprises 367 residues: Putative zinc metalloprotease mll0638 (367 aa).

A Zn(2+)-binding site is contributed by histidine 20. Glutamate 21 is a catalytic residue. Residue histidine 24 coordinates Zn(2+). 3 helical membrane passes run 108–130 (ATVV…VLFA), 291–313 (LGFE…LNLL), and 343–365 (MAYR…NDLF). One can recognise a PDZ domain in the interval 121-196 (TIVVFSVLFA…ITFVMLRDGK (76 aa)).

Belongs to the peptidase M50B family. Requires Zn(2+) as cofactor.

It is found in the cell inner membrane. This is Putative zinc metalloprotease mll0638 from Mesorhizobium japonicum (strain LMG 29417 / CECT 9101 / MAFF 303099) (Mesorhizobium loti (strain MAFF 303099)).